We begin with the raw amino-acid sequence, 685 residues long: MIKLIRFFRSRRCWVISLQARCFSAPSRTHFDFSGESSDTERALVSALGSCASSNDVTCGRQIHCRVLKSGLDSNGYICNSVLNMYAKCRLLADAESVFRDHAKLDSASFNIMVDGYVRSRRLWDALKLFDVMPERSCVSYTTLIKGYAQNNQWSEAMELFREMRNLGIMLNEVTLATVISACSHLGGIWDCRMLQSLAIKLKLEGRVFVSTNLLHMYCLCLCLKDARKLFDEMPERNLVTWNVMLNGYSKAGLIEQAEELFDQITEKDIVSWGTMIDGCLRKNQLDEALVYYTEMLRCGMKPSEVMMVDLLSASARSVGSSKGLQLHGTIVKRGFDCYDFLQATIIHFYAVSNDIKLALQQFEASVKDHIASRNALIAGFVKNGMVEQAREVFDQTHDKDIFSWNAMISGYAQSLSPQLALHLFREMISSSQVKPDAITMVSVFSAISSLGSLEEGKRAHDYLNFSTIPPNDNLTAAIIDMYAKCGSIETALNIFHQTKNISSSTISPWNAIICGSATHGHAKLALDLYSDLQSLPIKPNSITFVGVLSACCHAGLVELGKTYFESMKSDHGIEPDIKHYGCMVDLLGKAGRLEEAKEMIKKMPVKADVMIWGMLLSASRTHGNVEIAELAATELAAIDPSHGGCKVMLSNVYADAGRWEDVALVREEMRTRDVEWSRAFSGVV.

A mitochondrion-targeting transit peptide spans 1-23 (MIKLIRFFRSRRCWVISLQARCF). PPR repeat units lie at residues 40-74 (TERALVSALGSCASSNDVTCGRQIHCRVLKSGLDS), 75-105 (NGYICNSVLNMYAKCRLLADAESVFRDHAKL), 106-136 (DSASFNIMVDGYVRSRRLWDALKLFDVMPER), 137-171 (SCVSYTTLIKGYAQNNQWSEAMELFREMRNLGIML), 172-206 (NEVTLATVISACSHLGGIWDCRMLQSLAIKLKLEG), 207-237 (RVFVSTNLLHMYCLCLCLKDARKLFDEMPER), 238-268 (NLVTWNVMLNGYSKAGLIEQAEELFDQITEK), 269-303 (DIVSWGTMIDGCLRKNQLDEALVYYTEMLRCGMKP), 304-338 (SEVMMVDLLSASARSVGSSKGLQLHGTIVKRGFDC), 339-369 (YDFLQATIIHFYAVSNDIKLALQQFEASVKD), 370-400 (HIASRNALIAGFVKNGMVEQAREVFDQTHDK), 401-435 (DIFSWNAMISGYAQSLSPQLALHLFREMISSSQVK), 437-471 (DAITMVSVFSAISSLGSLEEGKRAHDYLNFSTIPP), 472-502 (NDNLTAAIIDMYAKCGSIETALNIFHQTKNI), 506-540 (TISPWNAIICGSATHGHAKLALDLYSDLQSLPIKP), 541-576 (NSITFVGVLSACCHAGLVELGKTYFESMKSDHGIEP), and 577-607 (DIKHYGCMVDLLGKAGRLEEAKEMIKKMPVK). The interval 612 to 685 (IWGMLLSASR…EWSRAFSGVV (74 aa)) is type E motif; degenerate.

The protein belongs to the PPR family. PCMP-E subfamily.

Its subcellular location is the mitochondrion. This is Pentatricopeptide repeat-containing protein At5g19020, mitochondrial (PCMP-E42) from Arabidopsis thaliana (Mouse-ear cress).